The sequence spans 350 residues: Small ribosomal subunit biogenesis GTPase RsgA (350 aa).

The segment covering 1 to 17 (MSKNKLSKGQQRRVNAN) has biased composition (polar residues). The disordered stretch occupies residues 1–33 (MSKNKLSKGQQRRVNANHQRRLKTSKEKPDYDD). The CP-type G domain maps to 104–273 (TSVLTRPDFY…VIDSPGVREF (170 aa)). GTP-binding positions include 160 to 163 (NKID) and 214 to 222 (GQSGVGKSS). Zn(2+) is bound by residues Cys297, Cys302, His304, and Cys310.

Belongs to the TRAFAC class YlqF/YawG GTPase family. RsgA subfamily. Monomer. Associates with 30S ribosomal subunit, binds 16S rRNA. Requires Zn(2+) as cofactor.

The protein localises to the cytoplasm. In terms of biological role, one of several proteins that assist in the late maturation steps of the functional core of the 30S ribosomal subunit. Helps release RbfA from mature subunits. May play a role in the assembly of ribosomal proteins into the subunit. Circularly permuted GTPase that catalyzes slow GTP hydrolysis, GTPase activity is stimulated by the 30S ribosomal subunit. The chain is Small ribosomal subunit biogenesis GTPase RsgA from Escherichia fergusonii (strain ATCC 35469 / DSM 13698 / CCUG 18766 / IAM 14443 / JCM 21226 / LMG 7866 / NBRC 102419 / NCTC 12128 / CDC 0568-73).